The following is a 67-amino-acid chain: Neurotoxin Cex10 (67 aa).

Residues 1-65 (KDGYLVEVTG…TWPLPNKSCG (65 aa)) form the LCN-type CS-alpha/beta domain. Cystine bridges form between C11–C64, C15–C40, C24–C45, and C28–C47. A Cysteine amide modification is found at C64. The propeptide occupies 65 to 67 (GKK).

Belongs to the long (4 C-C) scorpion toxin superfamily. Sodium channel inhibitor family. Beta subfamily. Expressed by the venom gland.

It localises to the secreted. In terms of biological role, beta toxins bind voltage-independently at site-4 of sodium channels (Nav) and shift the voltage of activation toward more negative potentials thereby affecting sodium channel activation and promoting spontaneous and repetitive firing. This Centruroides exilicauda (Bark scorpion) protein is Neurotoxin Cex10.